The primary structure comprises 181 residues: Large ribosomal subunit protein uL6 (181 aa).

This sequence belongs to the universal ribosomal protein uL6 family. Part of the 50S ribosomal subunit.

This protein binds to the 23S rRNA, and is important in its secondary structure. It is located near the subunit interface in the base of the L7/L12 stalk, and near the tRNA binding site of the peptidyltransferase center. This Synechococcus sp. (strain CC9605) protein is Large ribosomal subunit protein uL6.